Here is a 123-residue protein sequence, read N- to C-terminus: Small ribosomal subunit protein uS13 (123 aa).

The interval Thr103–Lys123 is disordered. A compositionally biased stretch (basic residues) spans Thr105–Lys123.

This sequence belongs to the universal ribosomal protein uS13 family. Part of the 30S ribosomal subunit. Forms a loose heterodimer with protein S19. Forms two bridges to the 50S subunit in the 70S ribosome.

In terms of biological role, located at the top of the head of the 30S subunit, it contacts several helices of the 16S rRNA. In the 70S ribosome it contacts the 23S rRNA (bridge B1a) and protein L5 of the 50S subunit (bridge B1b), connecting the 2 subunits; these bridges are implicated in subunit movement. Contacts the tRNAs in the A and P-sites. This is Small ribosomal subunit protein uS13 from Desulforudis audaxviator (strain MP104C).